The chain runs to 209 residues: Putative NAD(P)H nitroreductase YdgI (209 aa).

FMN-binding positions include 14-16 (RRS), 72-74 (QTQ), 161-162 (GG), and arginine 199.

The protein belongs to the nitroreductase family. FMN is required as a cofactor.

This is Putative NAD(P)H nitroreductase YdgI (ydgI) from Bacillus subtilis (strain 168).